The sequence spans 130 residues: Histone H2A type 1-B/E (130 aa).

Residues 1-22 (MSGRGKQGGKARAKAKTRSSRA) are disordered. An N-acetylserine modification is found at Ser2. A Phosphoserine; by RPS6KA5 modification is found at Ser2. Residue Arg4 is modified to Citrulline; alternate. At Arg4 the chain carries Symmetric dimethylarginine; by PRMT5; alternate. N6-(2-hydroxyisobutyryl)lysine; alternate occurs at positions 6 and 10. The residue at position 6 (Lys6) is an N6-acetyllysine; alternate. A compositionally biased stretch (basic residues) spans 7 to 19 (QGGKARAKAKTRS). Lys10 and Lys14 each carry N6-(beta-hydroxybutyryl)lysine; alternate. N6-lactoyllysine; alternate is present on Lys10. Lys10 carries the N6-succinyllysine; alternate modification. Lys14 is covalently cross-linked (Glycyl lysine isopeptide (Lys-Gly) (interchain with G-Cter in ubiquitin); alternate). A Glycyl lysine isopeptide (Lys-Gly) (interchain with G-Cter in ubiquitin) cross-link involves residue Lys16. An N6-(2-hydroxyisobutyryl)lysine; alternate modification is found at Lys37. Residue Lys37 is modified to N6-(beta-hydroxybutyryl)lysine; alternate. An N6-crotonyllysine; alternate modification is found at Lys37. Residues Lys75 and Lys76 each carry the N6-(2-hydroxyisobutyryl)lysine modification. Lys96 is subject to N6-(2-hydroxyisobutyryl)lysine; alternate. Lys96 bears the N6-(beta-hydroxybutyryl)lysine; alternate mark. Lys96 bears the N6-succinyllysine; alternate mark. At Lys96 the chain carries N6-glutaryllysine; alternate. The residue at position 105 (Gln105) is an N5-methylglutamine. Lys119 carries the N6-(2-hydroxyisobutyryl)lysine; alternate modification. An N6-(beta-hydroxybutyryl)lysine; alternate modification is found at Lys119. An N6-crotonyllysine; alternate mark is found at Lys119 and Lys120. An N6-glutaryllysine; alternate mark is found at Lys119 and Lys120. Residue Lys120 forms a Glycyl lysine isopeptide (Lys-Gly) (interchain with G-Cter in ubiquitin); alternate linkage. A Phosphothreonine; by DCAF1 modification is found at Thr121. Position 126 is an N6-crotonyllysine; alternate (Lys126). At Lys126 the chain carries N6-glutaryllysine; alternate.

Belongs to the histone H2A family. In terms of assembly, the nucleosome is a histone octamer containing two molecules each of H2A, H2B, H3 and H4 assembled in one H3-H4 heterotetramer and two H2A-H2B heterodimers. The octamer wraps approximately 147 bp of DNA. In terms of processing, deiminated on Arg-4 in granulocytes upon calcium entry. Post-translationally, monoubiquitination of Lys-120 (H2AK119Ub) by RING1, TRIM37 and RNF2/RING2 complex gives a specific tag for epigenetic transcriptional repression and participates in X chromosome inactivation of female mammals. It is involved in the initiation of both imprinted and random X inactivation. Ubiquitinated H2A is enriched in inactive X chromosome chromatin. Ubiquitination of H2A functions downstream of methylation of 'Lys-27' of histone H3 (H3K27me). H2AK119Ub by RNF2/RING2 can also be induced by ultraviolet and may be involved in DNA repair. Monoubiquitination of Lys-120 (H2AK119Ub) by TRIM37 may promote transformation of cells in a number of breast cancers. Following DNA double-strand breaks (DSBs), it is ubiquitinated through 'Lys-63' linkage of ubiquitin moieties by the E2 ligase UBE2N and the E3 ligases RNF8 and RNF168, leading to the recruitment of repair proteins to sites of DNA damage. Ubiquitination at Lys-14 and Lys-16 (H2AK13Ub and H2AK15Ub, respectively) in response to DNA damage is initiated by RNF168 that mediates monoubiquitination at these 2 sites, and 'Lys-63'-linked ubiquitin are then conjugated to monoubiquitin; RNF8 is able to extend 'Lys-63'-linked ubiquitin chains in vitro. Deubiquitinated by USP51 at Lys-14 and Lys-16 (H2AK13Ub and H2AK15Ub, respectively) after damaged DNA is repaired. H2AK119Ub and ionizing radiation-induced 'Lys-63'-linked ubiquitination (H2AK13Ub and H2AK15Ub) are distinct events. Phosphorylation on Ser-2 (H2AS1ph) is enhanced during mitosis. Phosphorylation on Ser-2 by RPS6KA5/MSK1 directly represses transcription. Acetylation of H3 inhibits Ser-2 phosphorylation by RPS6KA5/MSK1. Phosphorylation at Thr-121 (H2AT120ph) by DCAF1 is present in the regulatory region of many tumor suppresor genes and down-regulates their transcription. In terms of processing, glutamine methylation at Gln-105 (H2AQ104me) by FBL is specifically dedicated to polymerase I. It is present at 35S ribosomal DNA locus and impairs binding of the FACT complex. Post-translationally, symmetric dimethylation on Arg-4 by the PRDM1/PRMT5 complex may play a crucial role in the germ-cell lineage. Crotonylation (Kcr) is specifically present in male germ cells and marks testis-specific genes in post-meiotic cells, including X-linked genes that escape sex chromosome inactivation in haploid cells. Crotonylation marks active promoters and enhancers and confers resistance to transcriptional repressors. It is also associated with post-meiotically activated genes on autosomes. In terms of processing, lactylated in macrophages by EP300/P300 by using lactoyl-CoA directly derived from endogenous or exogenous lactate, leading to stimulates gene transcription.

It is found in the nucleus. The protein localises to the chromosome. In terms of biological role, core component of nucleosome. Nucleosomes wrap and compact DNA into chromatin, limiting DNA accessibility to the cellular machineries which require DNA as a template. Histones thereby play a central role in transcription regulation, DNA repair, DNA replication and chromosomal stability. DNA accessibility is regulated via a complex set of post-translational modifications of histones, also called histone code, and nucleosome remodeling. The chain is Histone H2A type 1-B/E from Homo sapiens (Human).